The following is a 347-amino-acid chain: Dihydroorotase (347 aa).

Positions 14 and 16 each coordinate Zn(2+). Residues 16-18 (HLR) and N42 each bind substrate. Residues K100, H137, and H175 each coordinate Zn(2+). K100 is subject to N6-carboxylysine. H137 serves as a coordination point for substrate. A substrate-binding site is contributed by L220. A Zn(2+)-binding site is contributed by D248. D248 is an active-site residue. Substrate-binding residues include H252 and A264.

This sequence belongs to the metallo-dependent hydrolases superfamily. DHOase family. Class II DHOase subfamily. In terms of assembly, homodimer. Zn(2+) is required as a cofactor.

The catalysed reaction is (S)-dihydroorotate + H2O = N-carbamoyl-L-aspartate + H(+). The protein operates within pyrimidine metabolism; UMP biosynthesis via de novo pathway; (S)-dihydroorotate from bicarbonate: step 3/3. Functionally, catalyzes the reversible cyclization of carbamoyl aspartate to dihydroorotate. The protein is Dihydroorotase of Pseudomonas syringae pv. syringae (strain B728a).